The following is a 207-amino-acid chain: Probable RNA 2'-phosphotransferase (207 aa).

This sequence belongs to the KptA/TPT1 family.

Removes the 2'-phosphate from RNA via an intermediate in which the phosphate is ADP-ribosylated by NAD followed by a presumed transesterification to release the RNA and generate ADP-ribose 1''-2''-cyclic phosphate (APPR&gt;P). May function as an ADP-ribosylase. The polypeptide is Probable RNA 2'-phosphotransferase (Methanosarcina acetivorans (strain ATCC 35395 / DSM 2834 / JCM 12185 / C2A)).